We begin with the raw amino-acid sequence, 362 residues long: Phosphoserine aminotransferase (362 aa).

Arg-43 contributes to the L-glutamate binding site. Pyridoxal 5'-phosphate is bound by residues 77–78 (AR), Trp-103, Thr-153, Asp-173, and Gln-196. Lys-197 carries the post-translational modification N6-(pyridoxal phosphate)lysine.

It belongs to the class-V pyridoxal-phosphate-dependent aminotransferase family. SerC subfamily. As to quaternary structure, homodimer. Pyridoxal 5'-phosphate is required as a cofactor.

Its subcellular location is the cytoplasm. It catalyses the reaction O-phospho-L-serine + 2-oxoglutarate = 3-phosphooxypyruvate + L-glutamate. The catalysed reaction is 4-(phosphooxy)-L-threonine + 2-oxoglutarate = (R)-3-hydroxy-2-oxo-4-phosphooxybutanoate + L-glutamate. The protein operates within amino-acid biosynthesis; L-serine biosynthesis; L-serine from 3-phospho-D-glycerate: step 2/3. It participates in cofactor biosynthesis; pyridoxine 5'-phosphate biosynthesis; pyridoxine 5'-phosphate from D-erythrose 4-phosphate: step 3/5. In terms of biological role, catalyzes the reversible conversion of 3-phosphohydroxypyruvate to phosphoserine and of 3-hydroxy-2-oxo-4-phosphonooxybutanoate to phosphohydroxythreonine. The sequence is that of Phosphoserine aminotransferase from Legionella pneumophila (strain Lens).